The following is a 386-amino-acid chain: Patatin-10 (386 aa).

Positions 1 to 23 are cleaved as a signal peptide; the sequence is MATTKSFLILFFMILATTSSTCA. The region spanning 32–229 is the PNPLA domain; sequence LSIDGGGIKG…TVGDPALLSL (198 aa). The GXGXXG motif lies at 36-41; sequence GGGIKG. The GXSXG motif lies at 75-79; that stretch reads GTSTG. The Nucleophile role is filled by S77. N-linked (GlcNAc...) asparagine glycosylation is present at N115. D215 (proton acceptor) is an active-site residue. The short motif at 215–217 is the DGA/G element; that stretch reads DGG. The stretch at 321-384 forms a coiled coil; it reads ENALTGTTTE…NRKKLRANKA (64 aa).

This sequence belongs to the patatin family. Tuber.

The protein localises to the vacuole. Probable lipolytic acyl hydrolase (LAH), an activity which is thought to be involved in the response of tubers to pathogens. The chain is Patatin-10 from Solanum tuberosum (Potato).